A 224-amino-acid chain; its full sequence is Urease accessory protein UreF (224 aa).

The protein belongs to the UreF family. As to quaternary structure, ureD, UreF and UreG form a complex that acts as a GTP-hydrolysis-dependent molecular chaperone, activating the urease apoprotein by helping to assemble the nickel containing metallocenter of UreC. The UreE protein probably delivers the nickel.

The protein resides in the cytoplasm. Functionally, required for maturation of urease via the functional incorporation of the urease nickel metallocenter. In Pseudomonas putida (strain GB-1), this protein is Urease accessory protein UreF.